A 130-amino-acid polypeptide reads, in one-letter code: Dihydroneopterin aldolase (130 aa).

Substrate contacts are provided by residues Glu-22, Tyr-54, and 73 to 74 (IE). Residue Lys-100 is the Proton donor/acceptor of the active site.

The protein belongs to the DHNA family.

It catalyses the reaction 7,8-dihydroneopterin = 6-hydroxymethyl-7,8-dihydropterin + glycolaldehyde. It functions in the pathway cofactor biosynthesis; tetrahydrofolate biosynthesis; 2-amino-4-hydroxy-6-hydroxymethyl-7,8-dihydropteridine diphosphate from 7,8-dihydroneopterin triphosphate: step 3/4. In terms of biological role, catalyzes the conversion of 7,8-dihydroneopterin to 6-hydroxymethyl-7,8-dihydropterin. The chain is Dihydroneopterin aldolase (folB) from Methylorubrum extorquens (strain ATCC 14718 / DSM 1338 / JCM 2805 / NCIMB 9133 / AM1) (Methylobacterium extorquens).